A 22-amino-acid polypeptide reads, in one-letter code: Brevinin-1OKd (22 aa).

K22 is modified (lysine amide).

As to expression, expressed by the skin glands.

The protein resides in the secreted. Its function is as follows. Antimicrobial peptide. The polypeptide is Brevinin-1OKd (Nidirana okinavana (Kampira Falls frog)).